Reading from the N-terminus, the 680-residue chain is Probable potassium transport system protein Kup (680 aa).

The next 12 helical transmembrane spans lie at Ile-16–Tyr-36, Ile-60–Leu-80, Trp-103–Pro-123, Glu-150–Thr-170, Phe-177–Met-197, Val-222–Ser-242, Ser-255–Leu-275, Ile-302–Gly-322, Leu-351–Phe-371, Ala-380–Leu-400, Trp-407–Ala-427, and Phe-432–Val-452.

The protein belongs to the HAK/KUP transporter (TC 2.A.72) family.

It localises to the cell membrane. The enzyme catalyses K(+)(in) + H(+)(in) = K(+)(out) + H(+)(out). Its function is as follows. Transport of potassium into the cell. Likely operates as a K(+):H(+) symporter. This Latilactobacillus sakei subsp. sakei (strain 23K) (Lactobacillus sakei subsp. sakei) protein is Probable potassium transport system protein Kup.